A 137-amino-acid polypeptide reads, in one-letter code: Active regulator of SIRT1 (137 aa).

Citrulline is present on R7. A compositionally biased stretch (low complexity) spans 14-24 (GAPEAPGAAPG). The tract at residues 14–58 (GAPEAPGAAPGHTKPSQAPMKRTRKAKATQAQKLRNSAKGKVPKS) is disordered. At S84 the chain carries Phosphoserine. Residues 96–120 (RQNRGRKACDRPVTKTKKKKKAEGT) are disordered.

This sequence belongs to the AROS family. Part of the small subunit (SSU) processome, composed of more than 70 proteins and the RNA chaperone small nucleolar RNA (snoRNA) U3. Interacts with RPS19; the interaction is direct and mediates the integration of RPS19 in state post-A1. Interacts with SIRT1. Citrullinated by PADI4.

The protein resides in the nucleus. The protein localises to the nucleolus. Functionally, part of the small subunit (SSU) processome, first precursor of the small eukaryotic ribosomal subunit. During the assembly of the SSU processome in the nucleolus, many ribosome biogenesis factors, an RNA chaperone and ribosomal proteins associate with the nascent pre-rRNA and work in concert to generate RNA folding, modifications, rearrangements and cleavage as well as targeted degradation of pre-ribosomal RNA by the RNA exosome. Acts as a chaperone that specifically mediates the integration of RPS19 in state post-A1. Direct regulator of SIRT1. Enhances SIRT1-mediated deacetylation of p53/TP53, thereby participating in inhibition of p53/TP53-mediated transcriptional activity. The chain is Active regulator of SIRT1 (RPS19BP1) from Bos taurus (Bovine).